The sequence spans 146 residues: Villin-like protein ABP41 (146 aa).

Belongs to the villin/gelsolin family. In terms of assembly, binds to actin. In terms of tissue distribution, expressed in pollen (at protein level).

Its subcellular location is the cytoplasm. The protein localises to the cytoskeleton. Its function is as follows. Ca(2+)-dependent actin filament-severing protein that is required for pollen tube growth. Probably regulates the dynamics of the actin cytoskeleton. It can promote the assembly of monomers into filaments (nucleation) as well as sever filaments already formed. This chain is Villin-like protein ABP41, found in Lilium davidii (David's lily).